The following is a 655-amino-acid chain: RalA-binding protein 1-A (655 aa).

The segment at 1–153 (MTECFLPPAS…KKSKDLTAAD (153 aa)) is disordered. The span at 52–68 (DILHEPPDIVSEDEKDH) shows a compositional bias: basic and acidic residues. 69-74 (GKKKGK) contributes to the ATP binding site. Basic residues-rich tracts occupy residues 69 to 79 (GKKKGKFKKKE) and 102 to 118 (KIKR…PSFS). Residues 102–119 (KIKRSKGIHVFKKPSFSK) form a nuclear localization signal region. Basic and acidic residues predominate over residues 119–150 (KKKEKDFKIKEKPKEEKHKEDKHKEKKSKDLT). Tandem repeats lie at residues 133–137 (EEKHK) and 138–142 (EDKHK). Residues 133 to 142 (EEKHKEDKHK) form a 2 X 5 AA tandem repeats of E-[D/E]-K-H-K region. The tract at residues 149–214 (LTAADVVKQW…PLVFRECIDF (66 aa)) is mediates association with membranes and could form transmembrane domains. Residues 187-383 (IPLIEAAERT…PLRWSNMATM (197 aa)) enclose the Rho-GAP domain. The segment at 398-495 (RRQEFLLNCL…LTEQEELVAM (98 aa)) is mediates interaction with RALA and RALB. 413 to 420 (AGVKDLSK) contributes to the ATP binding site. The tract at residues 494 to 510 (AMEQYLRRQIATEKEEI) is required to maintain nuclear localization. The interval 496 to 655 (EQYLRRQIAT…GKKLSSETLI (160 aa)) is mediates interaction with REPS1 and REPS2. Disordered stretches follow at residues 520–548 (IQSR…EEEL) and 600–655 (LQEE…ETLI). The span at 532-548 (EEYSSESESESEDEEEL) shows a compositional bias: acidic residues. Over residues 619–630 (NLPETKAPKDQP) the composition is skewed to basic and acidic residues.

In terms of assembly, interacts with the active, GTP-bound form of ralB and ralA.

It is found in the cell membrane. Its subcellular location is the cytoplasm. It localises to the cytosol. The protein resides in the cytoskeleton. The protein localises to the spindle pole. It is found in the nucleus. Its subcellular location is the mitochondrion. It localises to the cell projection. The protein resides in the lamellipodium. The catalysed reaction is an S-substituted glutathione(in) + ATP + H2O = an S-substituted glutathione(out) + ADP + phosphate + H(+). It carries out the reaction ATP + H2O + xenobioticSide 1 = ADP + phosphate + xenobioticSide 2.. The enzyme catalyses leukotriene C4(in) + ATP + H2O = leukotriene C4(out) + ADP + phosphate + H(+). In terms of biological role, multifunctional protein that functions as a downstream effector of ralA and ralB. As a GTPase-activating protein/GAP can inactivate CDC42 and RAC1 by stimulating their GTPase activity. As part of the Ral signaling pathway, may also regulate ligand-dependent EGF and insulin receptors-mediated endocytosis. During mitosis, may act as a scaffold protein in the phosphorylation of EPSIN/EPN1 by the mitotic kinase cyclin B-CDK1, preventing endocytosis during that phase of the cell cycle. During mitosis, also controls mitochondrial fission as an effector of ralA. Recruited to mitochondrion by ralA, acts as a scaffold to foster the mitotic kinase cyclin B-CDK1-mediated phosphorylation and activation of DNM1L. Acts on the cytoskeleton, to regulate pigment distribution and to regulate gastrulation. Could also function as a primary ATP-dependent active transporter for glutathione conjugates of electrophiles. May also actively catalyze the efflux of a wide range of substrates including xenobiotics like doxorubicin (DOX) contributing to cell multidrug resistance. The chain is RalA-binding protein 1-A (ralbp1-a) from Xenopus laevis (African clawed frog).